Reading from the N-terminus, the 137-residue chain is Small ribosomal subunit protein uS12 (137 aa).

Asp89 carries the 3-methylthioaspartic acid modification. Residues 105–137 (AGVAGRTQRRSKYGAKRPKAGQAAAPAKGKGKK) are disordered. Positions 111 to 123 (TQRRSKYGAKRPK) are enriched in basic residues. The segment covering 124-137 (AGQAAAPAKGKGKK) has biased composition (low complexity).

The protein belongs to the universal ribosomal protein uS12 family. In terms of assembly, part of the 30S ribosomal subunit. Contacts proteins S8 and S17. May interact with IF1 in the 30S initiation complex.

Functionally, with S4 and S5 plays an important role in translational accuracy. Its function is as follows. Interacts with and stabilizes bases of the 16S rRNA that are involved in tRNA selection in the A site and with the mRNA backbone. Located at the interface of the 30S and 50S subunits, it traverses the body of the 30S subunit contacting proteins on the other side and probably holding the rRNA structure together. The combined cluster of proteins S8, S12 and S17 appears to hold together the shoulder and platform of the 30S subunit. The sequence is that of Small ribosomal subunit protein uS12 from Phocaeicola vulgatus (strain ATCC 8482 / DSM 1447 / JCM 5826 / CCUG 4940 / NBRC 14291 / NCTC 11154) (Bacteroides vulgatus).